A 274-amino-acid polypeptide reads, in one-letter code: Aliphatic sulfonates import ATP-binding protein SsuB 2 (274 aa).

The ABC transporter domain occupies 21–242 (LALRGVARRF…SRGSARLAAL (222 aa)). 53–60 (GRSGCGKS) contacts ATP.

Belongs to the ABC transporter superfamily. Aliphatic sulfonates importer (TC 3.A.1.17.2) family. In terms of assembly, the complex is composed of two ATP-binding proteins (SsuB), two transmembrane proteins (SsuC) and a solute-binding protein (SsuA).

It is found in the cell inner membrane. It carries out the reaction ATP + H2O + aliphatic sulfonate-[sulfonate-binding protein]Side 1 = ADP + phosphate + aliphatic sulfonateSide 2 + [sulfonate-binding protein]Side 1.. Functionally, part of the ABC transporter complex SsuABC involved in aliphatic sulfonates import. Responsible for energy coupling to the transport system. This chain is Aliphatic sulfonates import ATP-binding protein SsuB 2, found in Pseudomonas aeruginosa (strain UCBPP-PA14).